Reading from the N-terminus, the 470-residue chain is Crh-like protein UTR2 (470 aa).

The N-terminal stretch at 1-23 (MRFSTLHFAFLATLSSIFTVVAA) is a signal peptide. Cys-58 and Cys-69 are joined by a disulfide. Residues Asn-65, Asn-100, and Asn-125 are each glycosylated (N-linked (GlcNAc...) asparagine). The GH16 domain occupies 95-282 (SDYLGNSTEA…WAGGLINWDS (188 aa)). Glu-168 acts as the Nucleophile in catalysis. Catalysis depends on Glu-172, which acts as the Proton donor. Residue Glu-172 coordinates chitin. 6 N-linked (GlcNAc...) asparagine glycosylation sites follow: Asn-177, Asn-194, Asn-198, Asn-202, Asn-235, and Asn-239. 2 residues coordinate chitin: Trp-259 and Thr-270. Residues Asn-314 and Asn-327 are each glycosylated (N-linked (GlcNAc...) asparagine). A disordered region spans residues 347–446 (SDDATGFDPQ…SSGSSSQGVA (100 aa)). Composition is skewed to low complexity over residues 370-384 (TTIT…ITSV) and 392-408 (TANV…QATA). Positions 409 to 418 (KSSTGTNTYD) are enriched in polar residues. Over residues 433 to 446 (TDSGSSGSSSQGVA) the composition is skewed to low complexity. Residue Ser-440 is the site of GPI-anchor amidated serine attachment. Residues 441–470 (SSQGVANSLNESVISGIFASICLGILSFFM) constitute a propeptide, removed in mature form. Asn-450 carries an N-linked (GlcNAc...) asparagine glycan.

The protein belongs to the glycosyl hydrolase 16 family. CRH1 subfamily. In terms of processing, the GPI-anchor is attached to the protein in the endoplasmic reticulum and serves to target the protein to the cell surface. There, the glucosamine-inositol phospholipid moiety is cleaved off and the GPI-modified mannoprotein is covalently attached via its lipidless GPI glycan remnant to the 1,6-beta-glucan of the outer cell wall layer.

It localises to the secreted. The protein localises to the cell wall. The protein resides in the membrane. The enzyme catalyses Random endo-hydrolysis of N-acetyl-beta-D-glucosaminide (1-&gt;4)-beta-linkages in chitin and chitodextrins.. In terms of biological role, dual chitinase/transglycosylase that plays a role in cell wall architecture. Chitinase and transglycosylase activities are coupled. Required for the polysaccharide cross-linking at the septa and the cell wall. More specifically, transfers chitin to 1,6-beta-glucan in the cell wall. Plays an important role in fungal pathogenesis via its functions in cell wall assembly and regeneration, filamentation, and adherence to host cells. Acts as a cell surface antigen in acute candidemia patients. The polypeptide is Crh-like protein UTR2 (Candida albicans (strain SC5314 / ATCC MYA-2876) (Yeast)).